The following is a 271-amino-acid chain: MSSDQVHLGHRARKRFGQNFLNDPYIIDGIVSSINPLPGQNLVEIGPGLGALTEPVGRLVDKFSVIELDRDLAKRLRHHPDLADKLTIYEGDAMRFDFTQLIKPNNKLRIFGNLPYNISTPLMFHLFTFHEHVEDMHFMLQKEVVNRLAAGPGCKAYGRLTVMAQYYSRVTPVLEVPPESFTPAPKVDSAVVRLTPYEVLPHPCTNLKWLDRVCREGFNQRRKTIRNCYKALLTVEQLEDLGVNPGLRPENITLQQFVKMANWLDANHQNA.

Residues N19, L21, G46, E67, D92, and N113 each coordinate S-adenosyl-L-methionine.

The protein belongs to the class I-like SAM-binding methyltransferase superfamily. rRNA adenine N(6)-methyltransferase family. RsmA subfamily.

It localises to the cytoplasm. It carries out the reaction adenosine(1518)/adenosine(1519) in 16S rRNA + 4 S-adenosyl-L-methionine = N(6)-dimethyladenosine(1518)/N(6)-dimethyladenosine(1519) in 16S rRNA + 4 S-adenosyl-L-homocysteine + 4 H(+). In terms of biological role, specifically dimethylates two adjacent adenosines (A1518 and A1519) in the loop of a conserved hairpin near the 3'-end of 16S rRNA in the 30S particle. May play a critical role in biogenesis of 30S subunits. The protein is Ribosomal RNA small subunit methyltransferase A of Photobacterium profundum (strain SS9).